The primary structure comprises 315 residues: DNA-directed RNA polymerase subunit alpha (315 aa).

The tract at residues 1 to 228 (MLEIEKPIIE…EHFKLFMSLT (228 aa)) is alpha N-terminal domain (alpha-NTD). Residues 245 to 315 (KEKVLEMTVE…LGLCLKLNDE (71 aa)) are alpha C-terminal domain (alpha-CTD).

It belongs to the RNA polymerase alpha chain family. Homodimer. The RNAP catalytic core consists of 2 alpha, 1 beta, 1 beta' and 1 omega subunit. When a sigma factor is associated with the core the holoenzyme is formed, which can initiate transcription.

It carries out the reaction RNA(n) + a ribonucleoside 5'-triphosphate = RNA(n+1) + diphosphate. Functionally, DNA-dependent RNA polymerase catalyzes the transcription of DNA into RNA using the four ribonucleoside triphosphates as substrates. In Clostridium botulinum (strain Alaska E43 / Type E3), this protein is DNA-directed RNA polymerase subunit alpha.